Reading from the N-terminus, the 130-residue chain is Methylglyoxal synthase (130 aa).

One can recognise an MGS-like domain in the interval methionine 1 to cysteine 130. Residues histidine 11, lysine 15, threonine 37–threonine 40, and serine 57–glycine 58 contribute to the substrate site. Aspartate 63 functions as the Proton donor/acceptor in the catalytic mechanism. Histidine 90 provides a ligand contact to substrate.

Belongs to the methylglyoxal synthase family.

The enzyme catalyses dihydroxyacetone phosphate = methylglyoxal + phosphate. Catalyzes the formation of methylglyoxal from dihydroxyacetone phosphate. The protein is Methylglyoxal synthase of Burkholderia vietnamiensis (strain G4 / LMG 22486) (Burkholderia cepacia (strain R1808)).